The primary structure comprises 189 residues: Orotate phosphoribosyltransferase (189 aa).

Residues R94, K95, K98, and 120–128 each bind 5-phospho-alpha-D-ribose 1-diphosphate; that span reads EDVTTTGGS. Orotate is bound by residues T124 and R152.

The protein belongs to the purine/pyrimidine phosphoribosyltransferase family. PyrE subfamily. In terms of assembly, homodimer. It depends on Mg(2+) as a cofactor.

It catalyses the reaction orotidine 5'-phosphate + diphosphate = orotate + 5-phospho-alpha-D-ribose 1-diphosphate. The protein operates within pyrimidine metabolism; UMP biosynthesis via de novo pathway; UMP from orotate: step 1/2. Functionally, catalyzes the transfer of a ribosyl phosphate group from 5-phosphoribose 1-diphosphate to orotate, leading to the formation of orotidine monophosphate (OMP). This chain is Orotate phosphoribosyltransferase, found in Thermococcus gammatolerans (strain DSM 15229 / JCM 11827 / EJ3).